The sequence spans 451 residues: Glycosyltransferase-like At2g41451 (451 aa).

An N-terminal signal peptide occupies residues 1–23; sequence MASSDSSYSRKFLLITFLPLSLA. N-linked (GlcNAc...) asparagine glycosylation is found at asparagine 36, asparagine 137, asparagine 168, asparagine 441, and asparagine 444. The 237-residue stretch at 109-345 folds into the GT92 domain; it reads QTLPWIFYHK…TYSKFSDLTS (237 aa).

This sequence belongs to the glycosyltransferase 92 family.

Its subcellular location is the secreted. It localises to the cell wall. The protein resides in the cytoplasm. It is found in the cell membrane. Its function is as follows. Involved in the coordination between cell elongation and cellulose synthesis by promoting the expression of genes involved in cell elongation and cellulose synthesis. Acts as a regulator of plasmodesmatal permeability. Maybe a glycosyltransferase. The polypeptide is Glycosyltransferase-like At2g41451 (Arabidopsis thaliana (Mouse-ear cress)).